The primary structure comprises 348 residues: Caricain (348 aa).

The first 16 residues, 1-16 (MAMIPSISKLLFVAIC), serve as a signal peptide directing secretion. A propeptide spans 17–132 (LFVHMSVSFG…EEFINEDTVN (116 aa)) (activation peptide). N-linked (GlcNAc...) asparagine glycosylation is present at Asn86. 3 disulfides stabilise this stretch: Cys154–Cys195, Cys188–Cys227, and Cys285–Cys336. The active site involves Cys157. Cys157 serves as a coordination point for E64. Residues His291 and Asn311 contribute to the active site.

This sequence belongs to the peptidase C1 family. As to quaternary structure, monomer.

It catalyses the reaction Hydrolysis of proteins with broad specificity for peptide bonds, similar to those of papain and chymopapain.. Repressed by the active-site-directed cysteine protease inhibitor E64 (L-trans-epoxysuccinyl-leucylamide-(4-guanido)-butane) produced by Aspergillus japonicus. Cysteine proteinase with a high level of diversity in substrate specificity. The sequence is that of Caricain from Carica papaya (Papaya).